Here is a 230-residue protein sequence, read N- to C-terminus: ATP synthase subunit a (230 aa).

6 helical membrane-spanning segments follow: residues 26-46 (ANAV…SLIA), 83-103 (FFPL…VGLI), 112-132 (NVNT…VVGI), 143-163 (FMGP…IGHL), 182-202 (LVLM…MMLM), and 203-223 (GVLV…IYIQ).

This sequence belongs to the ATPase A chain family. As to quaternary structure, F-type ATPases have 2 components, CF(1) - the catalytic core - and CF(0) - the membrane proton channel. CF(1) has five subunits: alpha(3), beta(3), gamma(1), delta(1), epsilon(1). CF(0) has three main subunits: a(1), b(2) and c(9-12). The alpha and beta chains form an alternating ring which encloses part of the gamma chain. CF(1) is attached to CF(0) by a central stalk formed by the gamma and epsilon chains, while a peripheral stalk is formed by the delta and b chains.

The protein resides in the cell inner membrane. Functionally, key component of the proton channel; it plays a direct role in the translocation of protons across the membrane. This is ATP synthase subunit a from Trichlorobacter lovleyi (strain ATCC BAA-1151 / DSM 17278 / SZ) (Geobacter lovleyi).